The following is a 179-amino-acid chain: Large ribosomal subunit protein uL5 (179 aa).

Belongs to the universal ribosomal protein uL5 family. Part of the 50S ribosomal subunit; part of the 5S rRNA/L5/L18/L25 subcomplex. Contacts the 5S rRNA and the P site tRNA. Forms a bridge to the 30S subunit in the 70S ribosome.

Functionally, this is one of the proteins that bind and probably mediate the attachment of the 5S RNA into the large ribosomal subunit, where it forms part of the central protuberance. In the 70S ribosome it contacts protein S13 of the 30S subunit (bridge B1b), connecting the 2 subunits; this bridge is implicated in subunit movement. Contacts the P site tRNA; the 5S rRNA and some of its associated proteins might help stabilize positioning of ribosome-bound tRNAs. This is Large ribosomal subunit protein uL5 from Burkholderia cenocepacia (strain HI2424).